A 295-amino-acid chain; its full sequence is Nucleotide-binding protein LSL_1171 (295 aa).

Residue 13–20 (GMSGAGKT) participates in ATP binding. Residue 63–66 (DLRS) coordinates GTP.

Belongs to the RapZ-like family.

Displays ATPase and GTPase activities. The chain is Nucleotide-binding protein LSL_1171 from Ligilactobacillus salivarius (strain UCC118) (Lactobacillus salivarius).